Here is a 757-residue protein sequence, read N- to C-terminus: MTTLHILGFPRVGAKRELKFAQERYWRKELAEQDLLDLAKALREKNWLHQAQADADFVTVGDFTFYDHILDLQVATGAIPARFGFDSQTLSLDQYFQLARGNKEQFAIEMTKWFDTNYHYLVPEFQKNTTFKANPTHYVNQIREAKAAGHQVKPVIVGPLTFLWLGKEKGEAFNRFDLLKQLVPIYFEILTSLAAEGVEWIQIDEPALALDLPQEWLAAYQDVYAQLAKVNAKLLLATYFGSVAEHADLLKALPVDGLHLDLVRAPEQLSAFEDYPKVLSAGVIDGRNIWRANLNRVLDVLEPLKAKFNQRLWIAPSCSLLHTPYDLAVETQLQQNNPELYRWLAFTLQKVAELQVLKQALNAGRSAVAEQLNDSQTAADARANSNVIHKAEVAQRLANLPTNADKRQSPFAERIKLQNKWLNLPLLPTTNIGSFPQTLEIRHARAAFKKGELSLADYEAAMKKEIEFVVRKQEELDLDVLVHGEAERNDMVEYFGELLDGFAFTKFGWVQSYGSRCVKPPVIYGDVTRPEPMTVRWSQYAQSLTDKVMKGMLTGPVTILQWSFVRNDIPRSTVCKQIGVALSDEVLDLEKAGIKVIQIDEPAIREGLPLKRADWDAYLQWAGEAFRLSYMGVKDDTQIHTHMCYSEFNDILPAIAGLDADVITIETSRSDMELLTAFADFKYPNDIGPGVYDIHSPRVPTAGEIEHLLRKALKVIPKERLWVNPDCGLKTRGWKETIEQLQVMVEVTKKLRAELAE.

Residues 16–19 and Lys112 contribute to the 5-methyltetrahydropteroyltri-L-glutamate site; that span reads RELK. Residues 432–434 and Glu485 contribute to the L-homocysteine site; that span reads IGS. Residues 432 to 434 and Glu485 contribute to the L-methionine site; that span reads IGS. 5-methyltetrahydropteroyltri-L-glutamate-binding positions include 516–517 and Trp562; that span reads RC. Asp600 is a binding site for L-homocysteine. Residue Asp600 coordinates L-methionine. Glu606 contacts 5-methyltetrahydropteroyltri-L-glutamate. The Zn(2+) site is built by His642, Cys644, and Glu666. His695 (proton donor) is an active-site residue. Position 727 (Cys727) interacts with Zn(2+).

It belongs to the vitamin-B12 independent methionine synthase family. Requires Zn(2+) as cofactor.

It carries out the reaction 5-methyltetrahydropteroyltri-L-glutamate + L-homocysteine = tetrahydropteroyltri-L-glutamate + L-methionine. The protein operates within amino-acid biosynthesis; L-methionine biosynthesis via de novo pathway; L-methionine from L-homocysteine (MetE route): step 1/1. Catalyzes the transfer of a methyl group from 5-methyltetrahydrofolate to homocysteine resulting in methionine formation. In Actinobacillus pleuropneumoniae serotype 7 (strain AP76), this protein is 5-methyltetrahydropteroyltriglutamate--homocysteine methyltransferase.